Reading from the N-terminus, the 388-residue chain is Succinate--CoA ligase [ADP-forming] subunit beta (388 aa).

The ATP-grasp domain maps to 9–244; that stretch reads KEIFRSMGVA…LEEEDPKEIE (236 aa). ATP is bound by residues lysine 46, 53–55, glutamate 99, cysteine 102, and glutamate 107; that span reads GRG. Mg(2+) is bound by residues asparagine 199 and aspartate 213. Substrate-binding positions include asparagine 264 and 321–323; that span reads GIM.

This sequence belongs to the succinate/malate CoA ligase beta subunit family. In terms of assembly, heterotetramer of two alpha and two beta subunits. Requires Mg(2+) as cofactor.

It carries out the reaction succinate + ATP + CoA = succinyl-CoA + ADP + phosphate. The catalysed reaction is GTP + succinate + CoA = succinyl-CoA + GDP + phosphate. It participates in carbohydrate metabolism; tricarboxylic acid cycle; succinate from succinyl-CoA (ligase route): step 1/1. Functionally, succinyl-CoA synthetase functions in the citric acid cycle (TCA), coupling the hydrolysis of succinyl-CoA to the synthesis of either ATP or GTP and thus represents the only step of substrate-level phosphorylation in the TCA. The beta subunit provides nucleotide specificity of the enzyme and binds the substrate succinate, while the binding sites for coenzyme A and phosphate are found in the alpha subunit. The sequence is that of Succinate--CoA ligase [ADP-forming] subunit beta from Staphylococcus haemolyticus (strain JCSC1435).